The sequence spans 83 residues: Mu-theraphotoxin-Hhn2b 1 (83 aa).

Positions 1 to 21 (MKASMFLALAGLVLLFVVCYA) are cleaved as a signal peptide. Positions 22–48 (SESEEKEFPRELISKIFAVDDFKGEER) are excised as a propeptide. 3 disulfide bridges follow: cysteine 50/cysteine 65, cysteine 57/cysteine 70, and cysteine 64/cysteine 77. A Leucine amide modification is found at leucine 81.

Belongs to the neurotoxin 10 (Hwtx-1) family. 14 (Hntx-1) subfamily. Monomer. Expressed by the venom gland.

The protein resides in the secreted. Its function is as follows. Weakly blocks the rat SCN2A/SCN1B (Nav1.2/beta-1) sodium channel (IC(50)=68 uM) and the insect sodium channel para/tipE (IC(50)=4.3 uM), without altering the activation or inactivation kinetics (depressant toxin). This Cyriopagopus hainanus (Chinese bird spider) protein is Mu-theraphotoxin-Hhn2b 1.